The sequence spans 131 residues: Small ribosomal subunit protein uS8 (131 aa).

It belongs to the universal ribosomal protein uS8 family. As to quaternary structure, part of the 30S ribosomal subunit. Contacts proteins S5 and S12.

Functionally, one of the primary rRNA binding proteins, it binds directly to 16S rRNA central domain where it helps coordinate assembly of the platform of the 30S subunit. This Acinetobacter baumannii (strain AB307-0294) protein is Small ribosomal subunit protein uS8.